Reading from the N-terminus, the 331-residue chain is Methionyl-tRNA formyltransferase (331 aa).

Residue 110–113 participates in (6S)-5,6,7,8-tetrahydrofolate binding; sequence SLLP. Residues 312-331 are disordered; that stretch reads HAPAERVSAAGSPAGAGGAP.

The protein belongs to the Fmt family.

The enzyme catalyses L-methionyl-tRNA(fMet) + (6R)-10-formyltetrahydrofolate = N-formyl-L-methionyl-tRNA(fMet) + (6S)-5,6,7,8-tetrahydrofolate + H(+). In terms of biological role, attaches a formyl group to the free amino group of methionyl-tRNA(fMet). The formyl group appears to play a dual role in the initiator identity of N-formylmethionyl-tRNA by promoting its recognition by IF2 and preventing the misappropriation of this tRNA by the elongation apparatus. This chain is Methionyl-tRNA formyltransferase, found in Frankia alni (strain DSM 45986 / CECT 9034 / ACN14a).